Here is a 298-residue protein sequence, read N- to C-terminus: ATP phosphoribosyltransferase (298 aa).

This sequence belongs to the ATP phosphoribosyltransferase family. Long subfamily. It depends on Mg(2+) as a cofactor.

It localises to the cytoplasm. It carries out the reaction 1-(5-phospho-beta-D-ribosyl)-ATP + diphosphate = 5-phospho-alpha-D-ribose 1-diphosphate + ATP. The protein operates within amino-acid biosynthesis; L-histidine biosynthesis; L-histidine from 5-phospho-alpha-D-ribose 1-diphosphate: step 1/9. Feedback inhibited by histidine. Its function is as follows. Catalyzes the condensation of ATP and 5-phosphoribose 1-diphosphate to form N'-(5'-phosphoribosyl)-ATP (PR-ATP). Has a crucial role in the pathway because the rate of histidine biosynthesis seems to be controlled primarily by regulation of HisG enzymatic activity. This Psychromonas ingrahamii (strain DSM 17664 / CCUG 51855 / 37) protein is ATP phosphoribosyltransferase.